The sequence spans 322 residues: MLFATLEHILTHISFSTISIVITIHLRALLVRELGGLRDSSEKGMIATFFSITGFLVSRWLSSGHFPLSNLYESLIFLSWALYILHTIPKVQNSKNDLSTITTPSTILTQGFATSGLLTEMHQSTILVPALQSQWLMMHVSMMLLSYATLLCGSLLSAAILIIRFRNNFNFFSKKNKNVLKKTFLFSKMEYFYAKRSYFKSASVPSFPNYYKYQLTERLDSWSYRVISLGFTLLTIGILCGAVWANEAWGSYWNWDPKETWAFITWTIFAIYLHSRTNQNWKGTNSALVASIGFLIIWICYFGINLLGIGLHSYGSFTLTPN.

The next 7 helical transmembrane spans lie at 2-22 (LFATLEHILTHISFSTISIVI), 44-64 (GMIATFFSITGFLVSRWLSSG), 68-88 (LSNLYESLIFLSWALYILHTI), 143-163 (MLLSYATLLCGSLLSAAILII), 226-246 (VISLGFTLLTIGILCGAVWAN), 260-274 (TWAFITWTIFAIYLH), and 289-309 (VASIGFLIIWICYFGINLLGI).

This sequence belongs to the CcmF/CycK/Ccl1/NrfE/CcsA family. In terms of assembly, may interact with Ccs1.

Its subcellular location is the plastid. The protein resides in the chloroplast thylakoid membrane. Functionally, required during biogenesis of c-type cytochromes (cytochrome c6 and cytochrome f) at the step of heme attachment. This Brachypodium distachyon (Purple false brome) protein is Cytochrome c biogenesis protein CcsA.